Consider the following 685-residue polypeptide: Bifunctional lycopene cyclase/phytoene synthase (685 aa).

The tract at residues 15–255 (TLSYRHFHLL…LVSACFTFDR (241 aa)) is lycopene beta-cyclase. The next 7 membrane-spanning stretches (helical) occupy residues 21-41 (FHLLWTLPLCAVLFLVARPFL), 48-68 (KLILLPIIAFVWTTPWDNLIV), 92-114 (YFFFVIQSLISTLWCTLLTRWAL), 129-149 (LATPAVVVCMLCFVLGLKAAV), 156-176 (YFGMITWWSSLPLALLLWGSV), 187-207 (GLAPFALSVLAPTFYLWASDV), and 231-251 (LPIEEMLFFLVTNLILVSACF). The segment at 262-685 (QSVAENAPPL…RAVSAVYFGV (424 aa)) is phytoene synthase.

This sequence in the N-terminal section; belongs to the lycopene beta-cyclase family. The protein in the C-terminal section; belongs to the phytoene/squalene synthase family.

It is found in the membrane. The enzyme catalyses all-trans-lycopene = gamma-carotene. It catalyses the reaction gamma-carotene = all-trans-beta-carotene. It carries out the reaction 2 (2E,6E,10E)-geranylgeranyl diphosphate = 15-cis-phytoene + 2 diphosphate. Its pathway is carotenoid biosynthesis; beta-carotene biosynthesis. The protein operates within carotenoid biosynthesis; phytoene biosynthesis; all-trans-phytoene from geranylgeranyl diphosphate: step 1/1. Its function is as follows. Bifunctional enzyme that catalyzes the reactions from geranylgeranyl diphosphate to phytoene (phytoene synthase) and lycopene to beta-carotene via the intermediate gamma-carotene (lycopene cyclase). The chain is Bifunctional lycopene cyclase/phytoene synthase from Sporisorium reilianum (strain SRZ2) (Maize head smut fungus).